The sequence spans 215 residues: Probable transaldolase (215 aa).

The active-site Schiff-base intermediate with substrate is Lys-83.

The protein belongs to the transaldolase family. Type 3B subfamily.

The protein resides in the cytoplasm. It carries out the reaction D-sedoheptulose 7-phosphate + D-glyceraldehyde 3-phosphate = D-erythrose 4-phosphate + beta-D-fructose 6-phosphate. The protein operates within carbohydrate degradation; pentose phosphate pathway; D-glyceraldehyde 3-phosphate and beta-D-fructose 6-phosphate from D-ribose 5-phosphate and D-xylulose 5-phosphate (non-oxidative stage): step 2/3. Its function is as follows. Transaldolase is important for the balance of metabolites in the pentose-phosphate pathway. This is Probable transaldolase from Anaeromyxobacter sp. (strain Fw109-5).